We begin with the raw amino-acid sequence, 490 residues long: Myocilin (490 aa).

A signal peptide spans 1–18 (MPAVQLLLLAGLVWGAGA). Positions 55–170 (SAIQDLQRDS…QEVARLARGQ (116 aa)) form a coiled coil. Residues 168–187 (RGQCPQARDTSQDVPAGSRE) form a disordered region. The Olfactomedin-like domain occupies 230–489 (GCGELVWVGQ…MVTYDIKLSK (260 aa)). Cys231 and Cys419 are disulfide-bonded. Residues Asp366, Asn414, Ala415, Ile463, and Asp464 each contribute to the Ca(2+) site. A Microbody targeting signal motif is present at residues 488–490 (SKI).

Homodimer (via N-terminus). Can also form higher oligomers. Interacts with OLFM3, FN1, NRCAM, GLDN and NFASC. Interacts (via N-terminus) with MYL2. Interacts with SFRP1, FRZB, FZD7, FZD10, FZD1 and WIF1; regulates Wnt signaling. Interacts with SNTA1; regulates muscle hypertrophy. Interacts with ERBB2 and ERBB3; activates ERBB2-ERBB3 signaling pathway. Interacts with SNCG; affects its secretion and its aggregation. Palmitoylated. Post-translationally, glycosylated. In terms of processing, undergoes a calcium-dependent proteolytic cleavage at Arg-212 by CAPN2 in the endoplasmic reticulum. The result is the production of two fragments, one of 35 kDa containing the C-terminal olfactomedin-like domain, and another of 20 kDa containing the N-terminal leucine zipper-like domain. In terms of tissue distribution, detected in eye aqueous humor (at protein level).

It is found in the secreted. It localises to the golgi apparatus. The protein resides in the cytoplasmic vesicle. The protein localises to the extracellular space. Its subcellular location is the extracellular matrix. It is found in the extracellular exosome. It localises to the mitochondrion. The protein resides in the mitochondrion intermembrane space. The protein localises to the mitochondrion inner membrane. Its subcellular location is the mitochondrion outer membrane. It is found in the rough endoplasmic reticulum. It localises to the cell projection. The protein resides in the cilium. The protein localises to the endoplasmic reticulum. In terms of biological role, secreted glycoprotein regulating the activation of different signaling pathways in adjacent cells to control different processes including cell adhesion, cell-matrix adhesion, cytoskeleton organization and cell migration. Promotes substrate adhesion, spreading and formation of focal contacts. Negatively regulates cell-matrix adhesion and stress fiber assembly through Rho protein signal transduction. Modulates the organization of actin cytoskeleton by stimulating the formation of stress fibers through interactions with components of Wnt signaling pathways. Promotes cell migration through activation of PTK2 and the downstream phosphatidylinositol 3-kinase signaling. Plays a role in bone formation and promotes osteoblast differentiation in a dose-dependent manner through mitogen-activated protein kinase signaling. Mediates myelination in the peripheral nervous system through ERBB2/ERBB3 signaling. Plays a role as a regulator of muscle hypertrophy through the components of dystrophin-associated protein complex. Involved in positive regulation of mitochondrial depolarization. Plays a role in neurite outgrowth. May participate in the obstruction of fluid outflow in the trabecular meshwork. The protein is Myocilin of Oryctolagus cuniculus (Rabbit).